The following is a 303-amino-acid chain: MKIAILSRDGALYSCKRLREAAEARKHSVEIIDPLSCYMNINSAAPSVHYRGRRLDKYDAVIPRIGSQITFYGTAVLRQFEMLGSYPLNNSVAVIRARDKLHSLQLLAREGIDLPITGFAHSPDDTGDLIAMVGGAPLVVKLVEGTQGIGVVLAETRQAAESVIDAFRGLNAHILVQEYVREAQGKDIRCLVIGNRVVAAIERQAKAGEFRSNLHRGGSANNVKITAQERAIAIKATKTLGLNVAGVDILRADRGPLVMEVNASPGLEGIETTTGFDIAGMMIEFIEQNTQRRFATSASISKS.

An ATP-grasp domain is found at 104–287 (LQLLAREGID…IAGMMIEFIE (184 aa)). ATP-binding positions include lysine 141, 178-179 (EY), aspartate 187, and 211-213 (RSN). The Mg(2+) site is built by aspartate 248, glutamate 260, and asparagine 262. Positions 248, 260, and 262 each coordinate Mn(2+).

This sequence belongs to the RimK family. Mg(2+) is required as a cofactor. Requires Mn(2+) as cofactor.

This is Probable alpha-L-glutamate ligase from Pectobacterium carotovorum subsp. carotovorum (strain PC1).